The primary structure comprises 1116 residues: MSGLRISDPSKLHLKKELTHIRKVASKGLRDPGTTSSWKSPLTSSRFVVEPPASNNVEILSNNQLDSQFPSSRVFGNNGKEKEKKVFLYNWKTQRTSSEKTEGEDETSWIQASLNDDDDDDDDVSDARNGGDSCLEETRSASMIRKSGFIKKKSKELDLSIGRKSTAKARNFPSHHLHVASGLSVVRDESDETEDFSNSENFPTKVSSPLLLKLKRKNWSRSSSKFLRGTSKREDSSHTCNSTPALSTSSYNMYGIRNPSTVGSWEDGDDELDDDNLDFKGRQGCGIPFYWTKRNLKHRGGCRSCCSPSFSDTLRRKGSSILCGSQSVYRRHRHSSGRFNKQKLALRSAKGVLPLLKYGGDSRGGSSIGIGYSDDDLSTDFGEIDLEAQSRLDGRRWSSCCKSQDGEREEEEEGGSTPESIQSLSQKYKPMFFDELIGQSIVVQSLMNAVKKGRVAHVYLFQGPRGTGKTSTARILSAALNCDVVTEEMKPCGYCKECSDYMLGKSRDLLELDAGKKNGAEKVRYLLKKLLTLAPQSSQRYKVFVIDECHLLPSRTWLSLLKFLENPLQKFVFVCITTDLDNVPRTIQSRCQKYIFNKVRDGDIVVRLRKIASDENLDVESQALDLIALNADGSLRDAETMLEQLSLMGKRITVDLVNELVGVVSDDKLLELLELALSSDTAETVKKARELLDLGADPILMMSQLASLIMDIIAGAYKALDEKYSEAFLDRRNLTEADLERLKHALKLLSEAEKQLRVSTDRSTWFIATLLQLGSMPSPGTTHTGSSRRQSSRATEESISREVIAYKQRSGLQCSNTASPTSIRKSGNLVREVKLSSSSSEVLESDTSMASHDDTTASTMTLTCRNSEKLNDIWIKCVDRCHSKTLKQLLYAHGKLLSISEVEGILVAYIAFGEGEIKARAERFVSSITNSIEMVLRRNVEVRIILLSETELLNSKQTRQIAVTTSSYTESGNEIPMKRIEAIIQEQRLETEWLQKTPGSQGRLKPERNQILPQEDTNGVKVLKICEMGEFQENQSGKRMEHCPVSPSLLHNSNFTNNKDNLGYESESGRGVCSLLFCWNTQKSPRRTKIKGTSMRSRRSRERRFSLFSACARPRK.

Disordered regions lie at residues 95 to 138 and 225 to 244; these read RTSS…LEET and KFLRGTSKREDSSHTCNSTP. Over residues 115–124 the composition is skewed to acidic residues; sequence NDDDDDDDDV. 2 short sequence motifs (PEST) span residues 257–282 and 402–422; these read RNPSTVGSWEDGDDELDDDNLDFKGR and KSQDGEREEEEEGGSTPESIQ. Residue 463 to 470 participates in ATP binding; it reads GPRGTGKT. Residues Cys482, Cys492, Cys495, and Cys498 each contribute to the Zn(2+) site. Residues 726–760 adopt a coiled-coil conformation; that stretch reads EAFLDRRNLTEADLERLKHALKLLSEAEKQLRVST. The interval 777–798 is disordered; that stretch reads PSPGTTHTGSSRRQSSRATEES. Over residues 778–793 the composition is skewed to polar residues; that stretch reads SPGTTHTGSSRRQSSR.

It belongs to the DnaX/STICHEL family.

The polypeptide is Protein STICHEL-like 1 (Arabidopsis thaliana (Mouse-ear cress)).